A 349-amino-acid chain; its full sequence is UPF0324 inner membrane protein YeiH (349 aa).

The Periplasmic portion of the chain corresponds to 1 to 12 (MTNITLQKQHRT). Residues 13-32 (LWHFIPGLALSAVITGVALW) traverse the membrane as a helical segment. Residues 33 to 35 (GGS) lie on the Cytoplasmic side of the membrane. Residues 36-58 (IPAVAGAGFSALTLAILLGMVLG) form a helical membrane-spanning segment. Residues 59-99 (NTIYPHIWKSCDGGVLFAKQYLLRLGIILYGFRLTFSQIAD) are Periplasmic-facing. Residues 100 to 122 (VGISGIIIDVLTLSSTFLLACFL) traverse the membrane as a helical segment. The Cytoplasmic segment spans residues 123-131 (GQKVFGLDK). Residues 132 to 151 (HTSWLIGAGSSICGAAAVLA) traverse the membrane as a helical segment. Residues 152-162 (TEPVVKAEASK) are Periplasmic-facing. A helical transmembrane segment spans residues 163-185 (VTVAVATVVIFGTVAIFLYPAIY). The Cytoplasmic segment spans residues 186-261 (PLMSQWFSPE…SGTNSGEKSK (76 aa)). A helical transmembrane segment spans residues 262–283 (ITIPWFAILFIVVAIFNSFHLL). The Periplasmic segment spans residues 284 to 289 (PQSVVN). Residues 290 to 312 (MLVTLDTFLLAMAMAALGLTTHV) form a helical membrane-spanning segment. Residues 313 to 321 (SALKKAGAK) are Cytoplasmic-facing. A helical membrane pass occupies residues 322-344 (PLLMALVLFAWLIVGGGAINYVI). At 345-349 (QSVIA) the chain is on the periplasmic side.

Belongs to the UPF0324 family.

The protein resides in the cell inner membrane. The polypeptide is UPF0324 inner membrane protein YeiH (yeiH) (Escherichia coli O6:H1 (strain CFT073 / ATCC 700928 / UPEC)).